The chain runs to 415 residues: L-cysteine:1D-myo-inositol 2-amino-2-deoxy-alpha-D-glucopyranoside ligase (415 aa).

Cys43 lines the Zn(2+) pocket. L-cysteinyl-5'-AMP-binding positions include 43–46 (CGIT), Thr58, and 81–83 (NVT). The short motif at 45–55 (ITPYDATHLGH) is the 'HIGH' region element. The 'ERGGDP' region motif lies at 187 to 192 (ERGGDP). Trp227 serves as a coordination point for L-cysteinyl-5'-AMP. Cys231 is a binding site for Zn(2+). 249-251 (GSD) provides a ligand contact to L-cysteinyl-5'-AMP. A Zn(2+)-binding site is contributed by His256. Ile283 lines the L-cysteinyl-5'-AMP pocket. Positions 289–293 (KMSKS) match the 'KMSKS' region motif.

This sequence belongs to the class-I aminoacyl-tRNA synthetase family. MshC subfamily. Monomer. The cofactor is Zn(2+).

The enzyme catalyses 1D-myo-inositol 2-amino-2-deoxy-alpha-D-glucopyranoside + L-cysteine + ATP = 1D-myo-inositol 2-(L-cysteinylamino)-2-deoxy-alpha-D-glucopyranoside + AMP + diphosphate + H(+). Its function is as follows. Catalyzes the ATP-dependent condensation of GlcN-Ins and L-cysteine to form L-Cys-GlcN-Ins. This Saccharomonospora viridis (strain ATCC 15386 / DSM 43017 / JCM 3036 / CCUG 5913 / NBRC 12207 / NCIMB 9602 / P101) (Thermoactinomyces viridis) protein is L-cysteine:1D-myo-inositol 2-amino-2-deoxy-alpha-D-glucopyranoside ligase.